A 1158-amino-acid chain; its full sequence is Rho1 guanine nucleotide exchange factor 2 (1158 aa).

Residues 42–141 (RSSGSITHSP…SFSVSDVSNG (100 aa)) are disordered. Residues 45 to 63 (GSITHSPTALSSTTSLNEN) are compositionally biased toward polar residues. The segment covering 68–81 (FRPASSLSFSPSSL) has biased composition (low complexity). Over residues 97–108 (KNNFYRRSSSTD) the composition is skewed to polar residues. Residues 132–141 (SFSVSDVSNG) show a composition bias toward low complexity. Residues 447–634 (KRQEIIFEVI…REFLTKLNYE (188 aa)) form the DH domain. The 136-residue stretch at 670 to 805 (LIFKGVVKLK…QHIEKQQDII (136 aa)) folds into the PH domain. Phosphoserine is present on residues Ser746 and Ser747. The CNH domain maps to 825–1120 (GNKLLCAVAY…KLLTDGRGLI (296 aa)).

Its subcellular location is the cytoplasm. Stimulates the exchange of Rho1 and Rho5 GDP-bound form into GTP-bound form. Controls septum formation, cell wall synthesis and localization of F-actin patches. The polypeptide is Rho1 guanine nucleotide exchange factor 2 (rgf2) (Schizosaccharomyces pombe (strain 972 / ATCC 24843) (Fission yeast)).